We begin with the raw amino-acid sequence, 530 residues long: Trigger factor (530 aa).

The region spanning D162–P243 is the PPIase FKBP-type domain. Residues N432–K530 form a disordered region. Basic and acidic residues-rich tracts occupy residues S459–P478 and K501–A512.

It belongs to the FKBP-type PPIase family. Tig subfamily.

The protein resides in the cytoplasm. It catalyses the reaction [protein]-peptidylproline (omega=180) = [protein]-peptidylproline (omega=0). Its function is as follows. Involved in protein export. Acts as a chaperone by maintaining the newly synthesized protein in an open conformation. Functions as a peptidyl-prolyl cis-trans isomerase. In Cutibacterium acnes (strain DSM 16379 / KPA171202) (Propionibacterium acnes), this protein is Trigger factor.